The sequence spans 737 residues: Ribosome-releasing factor 2, mitochondrial (737 aa).

Residues 1–36 (MLCNRLHKAAFAARLRPRLPATVASCRQVHNSDGTI) constitute a mitochondrion transit peptide. The tr-type G domain occupies 39–318 (KRIRNIGILA…SVLNFLPAPS (280 aa)). GTP contacts are provided by residues 48-55 (AHIDAGKT), 112-116 (DTPGH), and 166-169 (NKMD).

This sequence belongs to the TRAFAC class translation factor GTPase superfamily. Classic translation factor GTPase family. EF-G/EF-2 subfamily.

Its subcellular location is the mitochondrion. Functionally, mitochondrial GTPase that mediates the disassembly of ribosomes from messenger RNA at the termination of mitochondrial protein biosynthesis. Not involved in the GTP-dependent ribosomal translocation step during translation elongation. This chain is Ribosome-releasing factor 2, mitochondrial, found in Anopheles gambiae (African malaria mosquito).